A 1155-amino-acid chain; its full sequence is MKTIKPLPEGVRHSMRSGIIMFDMARVVEELVFNSLDAGATKVSIFVGVVSCSVKVVDDGSGVSRDDLVLLGERYATSKFHDFTNVETASETFGFRGEALASISDISLLEVRTKAIGRPNGYRKVMKGSKCLHLGIDDDRKDSGTTVTVRDLFYSQPVRRKYMQSSPKKVLESIKKCVFRIALVHSNVSFSVLDIESDEELFQTNPSSSAFSLLMRDAGTEAVNSLCKVNVTDGMLNVSGFECADDWKPTDGQQTGRRNRLQSNPGYILCIACPRRLYEFSFEPSKTHVEFKKWGPVLAFIERITLANWKKDRILELFDGGADILAKGDRQDLIDDKIRLQNGSLFSILHFLDADWPEAMEPAKKKLKRSNDHAPCSSLLFPSADFKQDGDYFSPRKDVWSPECEVELKIQNPKEQGTVAGFESRTDSLLQSRDIEMQTNEDFPQVTDLLETSLVADSKCRKQFLTRCQITTPVNINHDFMKDSDVLNFQFQGLKDELDVSNCIGKHLLRGCSSRVSLTFHEPKLSHVEGYESVVPMIPNEKQSSPRVLETREGGSYCDVYSDKTPDCSLGSSWQDTDWFTPQCSSDRGCVGIGEDFNITPIDTAEFDSYDEKVGSKKYLSSVNVGSSVTGSFCLSSEWSPMYSTPSATKWESEYQKGCRILEQSLRLGRMPDPEFCFSAANNIKFDHEVIPEMDCCETGTDSFTAIQNCTQLADKICKSSWGHADDVRIDQYSIRKEKFSYMDGTQNNAGKQRSKRSRSAPPFYREKKRFISLSCKSDTKPKNSDPSEPDDLECLTQPCNASQMHLKCSILDDVSYDHIQETEKRLSSASDLKASAGCRTVHSETQDEDVHEDFSSEEFLDPIKSTTKWRHNCAVSQVPKESHELHGQDGVFDISSGLLHLRSDESLVPESINRHSLEDAKVLQQVDKKYIPIVACGTVAIVDQHAADERIRLEELRTKVLAGKARTVTYLSADQELVLPEMGYQLLQSYSEQIRDWGWICNITVEGSTSFKKNMSIIQRKPTPITLNAVPCILGVNLSDVDLLEFLQQLADTDGSSTIPPSVLRVLNSKACRGAIMFGDSLLPSECSLIIDGLKQTSLCFQCAHGRPTTVPLVDLKALHKQIAKLSGRQVWHGLQRREITLDRAKSRLDNAKS.

This sequence belongs to the DNA mismatch repair MutL/HexB family. Heterodimer of MLH1 and MLH3, called MutLbeta, which is involved in correction of a specific subset of IDLs when associated with MutSbeta. Expressed in reproductive tissues.

Its subcellular location is the nucleus. In terms of biological role, involved in DNA mismatch repair (MMR), correcting insertion-deletion loops (IDLs) resulting from DNA replication, DNA damage or from recombination events between non-identical sequences during meiosis. Component of the MutLbeta heterodimer, which probably forms a ternary complex with the MutSbeta heterodimer that initially recognizes the DNA mismatches. This complex is thought to be responsible for directing the downstream MMR events, including strand discrimination, excision, and resynthesis. Plays a major role in promoting meiotic crossing-over and is involved in maintaining the genetic stability of simple sequence repeats by correction of frameshift intermediates. This is DNA mismatch repair protein MLH3 (MLH3) from Arabidopsis thaliana (Mouse-ear cress).